We begin with the raw amino-acid sequence, 491 residues long: Glutamate--tRNA ligase (491 aa).

Residues 12–22 (PSPTGTPHVGL) carry the 'HIGH' region motif. Residues 111–134 (STPEEVEERHKAAGRDPKLGYDNF) are disordered. Positions 117–134 (EERHKAAGRDPKLGYDNF) are enriched in basic and acidic residues. The short motif at 256 to 260 (KLSKR) is the 'KMSKS' region element. Lysine 259 serves as a coordination point for ATP.

This sequence belongs to the class-I aminoacyl-tRNA synthetase family. Glutamate--tRNA ligase type 1 subfamily. As to quaternary structure, monomer.

It localises to the cytoplasm. The enzyme catalyses tRNA(Glu) + L-glutamate + ATP = L-glutamyl-tRNA(Glu) + AMP + diphosphate. In terms of biological role, catalyzes the attachment of glutamate to tRNA(Glu) in a two-step reaction: glutamate is first activated by ATP to form Glu-AMP and then transferred to the acceptor end of tRNA(Glu). The chain is Glutamate--tRNA ligase from Rhodococcus jostii (strain RHA1).